The primary structure comprises 303 residues: 4-diphosphocytidyl-2-C-methyl-D-erythritol kinase (303 aa).

K21 is a catalytic residue. Residue 106 to 116 participates in ATP binding; that stretch reads PVAAGIGGGSA. D148 is a catalytic residue.

It belongs to the GHMP kinase family. IspE subfamily.

It catalyses the reaction 4-CDP-2-C-methyl-D-erythritol + ATP = 4-CDP-2-C-methyl-D-erythritol 2-phosphate + ADP + H(+). The protein operates within isoprenoid biosynthesis; isopentenyl diphosphate biosynthesis via DXP pathway; isopentenyl diphosphate from 1-deoxy-D-xylulose 5-phosphate: step 3/6. Its function is as follows. Catalyzes the phosphorylation of the position 2 hydroxy group of 4-diphosphocytidyl-2C-methyl-D-erythritol. This Nitrobacter hamburgensis (strain DSM 10229 / NCIMB 13809 / X14) protein is 4-diphosphocytidyl-2-C-methyl-D-erythritol kinase.